The sequence spans 307 residues: Regulating synaptic membrane exocytosis protein 3 (307 aa).

Positions 86-120 (STETGIAVEMRSRVTRQGSRESTDGSTNSNSSEGT) are disordered. Residues 109-119 (DGSTNSNSSEG) show a composition bias toward polar residues. The C2 domain occupies 155 to 273 (PMGDVHIAIM…DLSAAVTGWY (119 aa)). Phosphoserine is present on residues S294 and S297.

As to quaternary structure, binds PPFIA3. Does not bind RAB3.

The protein localises to the synapse. Functionally, regulates synaptic membrane exocytosis. The sequence is that of Regulating synaptic membrane exocytosis protein 3 (Rims3) from Mus musculus (Mouse).